The sequence spans 348 residues: Flagellar P-ring protein (348 aa).

An N-terminal signal peptide occupies residues 1 to 16 (MRVLTIFLLFMTSIFA).

The protein belongs to the FlgI family. In terms of assembly, the basal body constitutes a major portion of the flagellar organelle and consists of four rings (L,P,S, and M) mounted on a central rod.

It localises to the periplasm. Its subcellular location is the bacterial flagellum basal body. Functionally, assembles around the rod to form the L-ring and probably protects the motor/basal body from shearing forces during rotation. The polypeptide is Flagellar P-ring protein (Campylobacter jejuni subsp. jejuni serotype O:6 (strain 81116 / NCTC 11828)).